A 1678-amino-acid polypeptide reads, in one-letter code: Clathrin heavy chain (1678 aa).

7 WD40-like repeat regions span residues 24–67 (SFSF…RPIS), 68–107 (ADSAIMNPASKVIALKAQKTLQIFNIEMKSKMKAHTMNED), 108–149 (VVFW…SSLN), 150–195 (GCQI…QAIE), 196–257 (GHAA…PEAQ), 258–301 (NDFP…ISAD), and 302–330 (TIFVTAPHEASGGIIGVNRKGQVLSVTVD). CHCR repeat units follow at residues 538 to 684 (VAEE…QICV), 687 to 829 (ATKY…SEDI), 834 to 973 (ILVV…QLID), 980 to 1125 (LSET…VKEA), 1129 to 1270 (YIKA…FRLA), 1275 to 1421 (LHIV…LLLN), and 1424 to 1567 (LLVL…YDCF). The segment at 1334-1643 (REHLELFWSR…IQMEPQLMIT (310 aa)) is involved in binding clathrin light chain. The tract at residues 1552-1677 (EELLGWFLER…AGGRNMGYPY (126 aa)) is trimerization.

The protein belongs to the clathrin heavy chain family. In terms of assembly, clathrin triskelions, composed of 3 heavy chains and 3 light chains, are the basic subunits of the clathrin coat. Interacts with sau.

It is found in the cytoplasmic vesicle membrane. Its subcellular location is the membrane. The protein resides in the coated pit. Functionally, clathrin is the major protein of the polyhedral coat of coated pits and vesicles. The polypeptide is Clathrin heavy chain (Chc) (Drosophila melanogaster (Fruit fly)).